The chain runs to 558 residues: Formate--tetrahydrofolate ligase (558 aa).

65–72 provides a ligand contact to ATP; the sequence is TPAGEGKT.

The protein belongs to the formate--tetrahydrofolate ligase family.

It carries out the reaction (6S)-5,6,7,8-tetrahydrofolate + formate + ATP = (6R)-10-formyltetrahydrofolate + ADP + phosphate. The protein operates within one-carbon metabolism; tetrahydrofolate interconversion. This is Formate--tetrahydrofolate ligase from Methylobacterium sp. (strain 4-46).